A 506-amino-acid chain; its full sequence is Glutamate--tRNA ligase (506 aa).

Residues 14 to 24 (PSPTGYLHIGG) carry the 'HIGH' region motif. Residues 261-265 (KLSKR) carry the 'KMSKS' region motif. Position 264 (Lys264) interacts with ATP.

The protein belongs to the class-I aminoacyl-tRNA synthetase family. Glutamate--tRNA ligase type 1 subfamily. In terms of assembly, monomer.

It is found in the cytoplasm. The enzyme catalyses tRNA(Glu) + L-glutamate + ATP = L-glutamyl-tRNA(Glu) + AMP + diphosphate. Catalyzes the attachment of glutamate to tRNA(Glu) in a two-step reaction: glutamate is first activated by ATP to form Glu-AMP and then transferred to the acceptor end of tRNA(Glu). The chain is Glutamate--tRNA ligase from Roseiflexus sp. (strain RS-1).